Here is a 215-residue protein sequence, read N- to C-terminus: Protein-L-isoaspartate O-methyltransferase (215 aa).

The active site involves S62.

Belongs to the methyltransferase superfamily. L-isoaspartyl/D-aspartyl protein methyltransferase family.

It is found in the cytoplasm. It carries out the reaction [protein]-L-isoaspartate + S-adenosyl-L-methionine = [protein]-L-isoaspartate alpha-methyl ester + S-adenosyl-L-homocysteine. Functionally, catalyzes the methyl esterification of L-isoaspartyl residues in peptides and proteins that result from spontaneous decomposition of normal L-aspartyl and L-asparaginyl residues. It plays a role in the repair and/or degradation of damaged proteins. The polypeptide is Protein-L-isoaspartate O-methyltransferase (Nitratidesulfovibrio vulgaris (strain DSM 19637 / Miyazaki F) (Desulfovibrio vulgaris)).